A 68-amino-acid polypeptide reads, in one-letter code: Basic phospholipase A2 homolog BdipTx-I (68 aa).

Cys28 and Cys44 are joined by a disulfide.

Belongs to the phospholipase A2 family. Group II subfamily. K49 sub-subfamily. Expressed by the venom gland.

Its subcellular location is the secreted. Its function is as follows. Snake venom phospholipase A2 (PLA2) that lacks enzymatic activity. Is myotoxic, induces edema, and causes systemic effects (renal changes that lead to proteinuria) on mice. A model of myotoxic mechanism has been proposed: an apo Lys49-PLA2 is activated by the entrance of a hydrophobic molecule (e.g. fatty acid) at the hydrophobic channel of the protein leading to a reorientation of a monomer. This reorientation causes a transition between 'inactive' to 'active' states, causing alignment of C-terminal and membrane-docking sites (MDoS) side-by-side and putting the membrane-disruption sites (MDiS) in the same plane, exposed to solvent and in a symmetric position for both monomers. The MDoS region stabilizes the toxin on membrane by the interaction of charged residues with phospholipid head groups. Subsequently, the MDiS region destabilizes the membrane with penetration of hydrophobic residues. This insertion causes a disorganization of the membrane, allowing an uncontrolled influx of ions (i.e. calcium and sodium), and eventually triggering irreversible intracellular alterations and cell death. In Bothrops diporus (Chaco lancehead), this protein is Basic phospholipase A2 homolog BdipTx-I.